The sequence spans 378 residues: Probable pectin lyase C (378 aa).

Residues 1–18 (MKVPFLQLLCLNAALASA) form the signal peptide. Cystine bridges form between C81–C100 and C90–C220. N-linked (GlcNAc...) asparagine glycosylation is present at N123. R250 is a catalytic residue. A disulfide bridge connects residues C316 and C324.

Belongs to the polysaccharide lyase 1 family.

The protein resides in the secreted. It catalyses the reaction Eliminative cleavage of (1-&gt;4)-alpha-D-galacturonan methyl ester to give oligosaccharides with 4-deoxy-6-O-methyl-alpha-D-galact-4-enuronosyl groups at their non-reducing ends.. In terms of biological role, pectinolytic enzymes consist of four classes of enzymes: pectin lyase, polygalacturonase, pectin methylesterase and rhamnogalacturonase. Among pectinolytic enzymes, pectin lyase is the most important in depolymerization of pectin, since it cleaves internal glycosidic bonds of highly methylated pectins. This chain is Probable pectin lyase C (pelC), found in Aspergillus niger.